The primary structure comprises 447 residues: GTPase Der (447 aa).

EngA-type G domains are found at residues glutamine 4–glutamate 165 and leucine 180–asparagine 357. GTP-binding positions include glycine 10–serine 17, aspartate 57–leucine 61, asparagine 119–glutamate 122, glycine 186–serine 193, aspartate 233–leucine 237, and asparagine 298–aspartate 301. The KH-like domain maps to lysine 358–lysine 443.

This sequence belongs to the TRAFAC class TrmE-Era-EngA-EngB-Septin-like GTPase superfamily. EngA (Der) GTPase family. Associates with the 50S ribosomal subunit.

Functionally, GTPase that plays an essential role in the late steps of ribosome biogenesis. This Rickettsia conorii (strain ATCC VR-613 / Malish 7) protein is GTPase Der.